A 373-amino-acid chain; its full sequence is Saccharopine dehydrogenase [NAD(+), L-lysine-forming] (373 aa).

Alanine 2 carries the N-acetylalanine; partial modification. The L-saccharopine site is built by arginine 18 and lysine 77. Lysine 77 acts as the Proton acceptor in catalysis. Residue histidine 96 is the Proton donor of the active site. Glutamine 101 is a binding site for L-saccharopine. Residue arginine 130 coordinates NAD(+). Arginine 131 and phenylalanine 135 together coordinate L-saccharopine. NAD(+) contacts are provided by residues 203–204 (GR), aspartate 227, threonine 231, tyrosine 251, and valine 278. Cysteine 205 and cysteine 249 are joined by a disulfide. 279–281 (SAD) lines the L-saccharopine pocket. Residue 318–321 (IDHL) coordinates NAD(+). The Microbody targeting signal signature appears at 371-373 (SRL).

It belongs to the AlaDH/PNT family. As to quaternary structure, monomer.

The protein localises to the peroxisome. The catalysed reaction is L-saccharopine + NAD(+) + H2O = L-lysine + 2-oxoglutarate + NADH + H(+). It functions in the pathway amino-acid biosynthesis; L-lysine biosynthesis via AAA pathway; L-lysine from L-alpha-aminoadipate (fungal route): step 3/3. Inhibited by p-chloromercuribenzoate and iodoacetate by modification of the active site cysteine residue. Inhibited by diethyl pyrocarbonate by modification of histidine residues. Inhibited by pyridoxal 5'-phosphate by modification of an essential lysine residue. Functionally, catalyzes the NAD(+)-dependent cleavage of saccharopine to L-lysine and 2-oxoglutarate, the final step in the alpha-aminoadipate (AAA) pathway for lysine biosynthesis. The protein is Saccharopine dehydrogenase [NAD(+), L-lysine-forming] of Saccharomyces cerevisiae (strain ATCC 204508 / S288c) (Baker's yeast).